The following is a 198-amino-acid chain: LexA repressor (198 aa).

Residues 28–47 (IRDIAKHFKLTPRGAHIHVL) constitute a DNA-binding region (H-T-H motif). Catalysis depends on for autocatalytic cleavage activity residues Ser-120 and Lys-157.

This sequence belongs to the peptidase S24 family. Homodimer.

It catalyses the reaction Hydrolysis of Ala-|-Gly bond in repressor LexA.. Functionally, represses a number of genes involved in the response to DNA damage (SOS response), including recA and lexA. In the presence of single-stranded DNA, RecA interacts with LexA causing an autocatalytic cleavage which disrupts the DNA-binding part of LexA, leading to derepression of the SOS regulon and eventually DNA repair. The protein is LexA repressor of Thermosipho africanus (strain TCF52B).